The primary structure comprises 131 residues: Methylglyoxal synthase (131 aa).

The MGS-like domain maps to 1-131; sequence MKIALIAHDK…GDLDYRKLRK (131 aa). Residues His-8, Lys-12, 34–37, and 54–55 contribute to the substrate site; these read TGTT and SG. Asp-60 (proton donor/acceptor) is an active-site residue. His-87 contributes to the substrate binding site.

Belongs to the methylglyoxal synthase family.

It catalyses the reaction dihydroxyacetone phosphate = methylglyoxal + phosphate. Its function is as follows. Catalyzes the formation of methylglyoxal from dihydroxyacetone phosphate. This chain is Methylglyoxal synthase, found in Bacillus mycoides (strain KBAB4) (Bacillus weihenstephanensis).